Here is a 365-residue protein sequence, read N- to C-terminus: P43 5S RNA-binding protein (365 aa).

9 C2H2-type zinc fingers span residues 15–39, 45–69, 75–100, 106–130, 136–160, 163–187, 191–213, 220–245, and 251–275; these read FRCPAAGCKAVYRKEGKLRDHMAGH, WKCGKKDCGKMFARKRQIQKHMKRH, HSCPTAGCKMTFSTKKSLSRHKLYKH, LKCSVPGCKRSFRKKRALRIHVSEH, SVCDVPGCGWKSTSAAKLAAHHRRH, YRCSYEDCQTVSPTWTALQTHLKKH, LQCAACKKPFKKASALRRHKATH, LPCPRQDCDKIFSTVFNLTHHLRKVH, and HRCPHSNCTRSFAMRESLVRHLVVH.

As to quaternary structure, the 42S RNP particle comprises four subunits each of which contains one molecule of 5S RNA, three molecules of tRNA, two molecules of p50 (EF1-alpha) and one molecule of the 5S RNA binding protein 43.

Its function is as follows. p43 is a 5S RNA binding protein which is a major constituent of oocytes and comprises part of a 42S ribonucleoprotein storage particle. This chain is P43 5S RNA-binding protein, found in Xenopus borealis (Kenyan clawed frog).